Consider the following 372-residue polypeptide: Oxysterol-binding protein 3 (372 aa).

Over residues 1–10 (MGKSDRKLTE) the composition is skewed to basic and acidic residues. The interval 1–25 (MGKSDRKLTEENSIENGVKPGKLTE) is disordered.

The protein belongs to the OSBP family.

In Dictyostelium discoideum (Social amoeba), this protein is Oxysterol-binding protein 3 (osbC).